The sequence spans 1501 residues: RE1-silencing transcription factor A (1501 aa).

The C2H2-type 1 zinc finger occupies F158 to H180. Over residues V186–D200 the composition is skewed to basic and acidic residues. Positions V186 to I209 are disordered. C2H2-type zinc fingers lie at residues I214–H236, Y246–H268, Y274–H296, Y302–H324, F330–H353, L359–H381, and F387–H410. Disordered regions lie at residues S491–S514, S569–S612, P885–D929, and V1040–Q1079. Basic and acidic residues-rich tracts occupy residues K498 to R512 and I594 to D605. Over residues Q1067 to Q1079 the composition is skewed to polar residues. Residues F1463–H1485 form a C2H2-type 9 zinc finger.

It localises to the nucleus. It is found in the cytoplasm. Its function is as follows. Transcriptional repressor which binds neuron-restrictive silencer element (NRSE) and represses neuronal gene transcription in non-neuronal cells. Plays a role in the early development of the nervous system and is required for proper patterning of the neuroectoderm during gastrulation. This involves the correct speciation of the neuroepithelial domain and adequate development of the non-neural ectoderm. The polypeptide is RE1-silencing transcription factor A (rest-a) (Xenopus laevis (African clawed frog)).